The following is a 570-amino-acid chain: Sulfite reductase [NADPH] hemoprotein beta-component (570 aa).

[4Fe-4S] cluster-binding residues include cysteine 434, cysteine 440, cysteine 479, and cysteine 483. Cysteine 483 provides a ligand contact to siroheme.

It belongs to the nitrite and sulfite reductase 4Fe-4S domain family. Alpha(8)-beta(8). The alpha component is a flavoprotein, the beta component is a hemoprotein. It depends on siroheme as a cofactor. Requires [4Fe-4S] cluster as cofactor.

It carries out the reaction hydrogen sulfide + 3 NADP(+) + 3 H2O = sulfite + 3 NADPH + 4 H(+). It functions in the pathway sulfur metabolism; hydrogen sulfide biosynthesis; hydrogen sulfide from sulfite (NADPH route): step 1/1. In terms of biological role, component of the sulfite reductase complex that catalyzes the 6-electron reduction of sulfite to sulfide. This is one of several activities required for the biosynthesis of L-cysteine from sulfate. In Salmonella heidelberg (strain SL476), this protein is Sulfite reductase [NADPH] hemoprotein beta-component.